The chain runs to 594 residues: MSKSRRVFLSMQDDDDFWGNGDRFEEEKSCLAAKAKQRSCPVVEMEEDDEEMEEKYFFKQSHLVRQRLEQMKEREKVDEEKEGVERREENGFSGKPWKFRVDSDEHEMKSDDVVTEDRSIMGTKTFNSDFDDKSAIKSSLSMSLESNDVFYANYRNFFRGRPEVHFLIRCLFEKNPETFDNQFIDLYEKTRKRLEMYPNPHINQILRRTLSSSNATETRVRSKHAVVVSNFREPDRRLGRYSKYYYHHNVGPEVYSRKVFVGGLPACVTEDDILGFFSRYGRLQVDWPSKHYGGSKSDSDPSLCSEIITPPAPLSHLSMASPPFGQINPFMSGYVAPAETRGGFLRASGFSEGGGFGGGFGGGIGGGGGFNSGSGSGNGTKSDGSTSEKRQSHLGYVFLLFEKERSVRDLVAECFEEEEGLFITLESSLEPIRVQIRPWLLADAEFLMDFNVPINTKLVAFIGGVPRPLKAVELAHFFEQTYGNVVCVGIDIDNKFKYPRGSGRVAFSNYDAYVQAITDRYIVLDHEDIHKRVEIKPYFFHNQSCEECSGRYHRQHAPFFCPSLECFQYYCEPCWHKMHAHPSRFHHMPVVKGV.

Over residues 72–90 the composition is skewed to basic and acidic residues; the sequence is KEREKVDEEKEGVERREEN. 2 disordered regions span residues 72–91 and 367–388; these read KEREKVDEEKEGVERREENG and GGGFNSGSGSGNGTKSDGSTSE. Residues 367-378 are compositionally biased toward gly residues; sequence GGGFNSGSGSGN. Positions 458 to 540 constitute an RRM domain; sequence LVAFIGGVPR…KRVEIKPYFF (83 aa).

Its function is as follows. Cytoplasmic polyadenylation element binding protein that binds to and regulates the translation of specific mRNAs. The chain is Cytoplasmic polyadenylation element-binding protein 2 (cpb-2) from Caenorhabditis japonica.